A 122-amino-acid chain; its full sequence is Large ribosomal subunit protein uL14c (122 aa).

This sequence belongs to the universal ribosomal protein uL14 family. Part of the 50S ribosomal subunit.

It is found in the plastid. Its function is as follows. Binds to 23S rRNA. This is Large ribosomal subunit protein uL14c from Cuscuta reflexa (Southern Asian dodder).